Here is a 671-residue protein sequence, read N- to C-terminus: DNA ligase (671 aa).

Residues 32–36 (DAEYD), 81–82 (SL), and Glu-113 contribute to the NAD(+) site. Catalysis depends on Lys-115, which acts as the N6-AMP-lysine intermediate. 4 residues coordinate NAD(+): Arg-136, Glu-173, Lys-290, and Lys-314. Residues Cys-408, Cys-411, Cys-426, and Cys-432 each contribute to the Zn(2+) site. Residues 593–671 (EIDSPFAGKT…EAEMIRLLGA (79 aa)) form the BRCT domain.

This sequence belongs to the NAD-dependent DNA ligase family. LigA subfamily. Requires Mg(2+) as cofactor. The cofactor is Mn(2+).

It carries out the reaction NAD(+) + (deoxyribonucleotide)n-3'-hydroxyl + 5'-phospho-(deoxyribonucleotide)m = (deoxyribonucleotide)n+m + AMP + beta-nicotinamide D-nucleotide.. DNA ligase that catalyzes the formation of phosphodiester linkages between 5'-phosphoryl and 3'-hydroxyl groups in double-stranded DNA using NAD as a coenzyme and as the energy source for the reaction. It is essential for DNA replication and repair of damaged DNA. This Salmonella paratyphi A (strain ATCC 9150 / SARB42) protein is DNA ligase.